We begin with the raw amino-acid sequence, 125 residues long: Cytochrome c' (125 aa).

Residues Arg10, Glu67, Cys116, Cys119, and His120 each contribute to the heme c site.

As to quaternary structure, homodimer. Post-translationally, binds 1 heme c group covalently per subunit.

Its function is as follows. Cytochrome c' is the most widely occurring bacterial c-type cytochrome. Cytochromes c' are high-spin proteins and the heme has no sixth ligand. Their exact function is not known. The polypeptide is Cytochrome c' (Pararhodospirillum photometricum (Rhodospirillum photometricum)).